The primary structure comprises 424 residues: Enolase (424 aa).

Glutamine 165 is a binding site for (2R)-2-phosphoglycerate. Glutamate 207 functions as the Proton donor in the catalytic mechanism. Mg(2+)-binding residues include aspartate 244, glutamate 283, and aspartate 310. (2R)-2-phosphoglycerate is bound by residues lysine 335, arginine 364, serine 365, and lysine 386. Catalysis depends on lysine 335, which acts as the Proton acceptor.

The protein belongs to the enolase family. The cofactor is Mg(2+).

It is found in the cytoplasm. The protein localises to the secreted. It localises to the cell surface. The catalysed reaction is (2R)-2-phosphoglycerate = phosphoenolpyruvate + H2O. It participates in carbohydrate degradation; glycolysis; pyruvate from D-glyceraldehyde 3-phosphate: step 4/5. In terms of biological role, catalyzes the reversible conversion of 2-phosphoglycerate (2-PG) into phosphoenolpyruvate (PEP). It is essential for the degradation of carbohydrates via glycolysis. The polypeptide is Enolase (Chlamydia trachomatis serovar L2 (strain ATCC VR-902B / DSM 19102 / 434/Bu)).